A 383-amino-acid chain; its full sequence is Probable mannan endo-1,4-beta-mannosidase A (383 aa).

An N-terminal signal peptide occupies residues 1–21; sequence MKLSNALLTLASLALANVSTA. N17 carries N-linked (GlcNAc...) asparagine glycosylation. W92 provides a ligand contact to substrate. The N-linked (GlcNAc...) asparagine glycan is linked to N194. N205 contributes to the substrate binding site. The Proton donor role is filled by E206. A glycan (N-linked (GlcNAc...) asparagine) is linked at N263. Substrate is bound at residue Y281. The active-site Nucleophile is the E314. Position 344 (W344) interacts with substrate.

The protein belongs to the glycosyl hydrolase 5 (cellulase A) family.

It is found in the secreted. The catalysed reaction is Random hydrolysis of (1-&gt;4)-beta-D-mannosidic linkages in mannans, galactomannans and glucomannans.. In terms of biological role, endo-1,4-mannanase, a crucial enzyme for depolymerization of seed galactomannans and wood galactoglucomannans. This is Probable mannan endo-1,4-beta-mannosidase A (manA) from Aspergillus niger (strain ATCC MYA-4892 / CBS 513.88 / FGSC A1513).